Reading from the N-terminus, the 398-residue chain is Sphingosine 1-phosphate receptor 5 (398 aa).

At 1 to 40 (MESGLLRPAPVSEVIVLHYNYTGKLRGARYQPGAGLRADA) the chain is on the extracellular side. Asparagine 20 carries an N-linked (GlcNAc...) asparagine glycan. A helical membrane pass occupies residues 41 to 61 (VVCLAVCAFIVLENLAVLLVL). The Cytoplasmic portion of the chain corresponds to 62-70 (GRHPRFHAP). Residues 71–91 (MFLLLGSLTLSDLLAGAAYAA) traverse the membrane as a helical segment. The Extracellular portion of the chain corresponds to 92–111 (NILLSGPLTLKLSPALWFAR). A helical transmembrane segment spans residues 112 to 132 (EGGVFVALTASVLSLLAIALE). The Cytoplasmic portion of the chain corresponds to 133 to 151 (RSLTMARRGPAPVSSRGRT). A helical membrane pass occupies residues 152–172 (LAMAAAAWGVSLLLGLLPALG). The Extracellular portion of the chain corresponds to 173 to 192 (WNCLGRLDACSTVLPLYAKA). The helical transmembrane segment at 193-213 (YVLFCVLAFVGILAAICALYA) threads the bilayer. Residues 214–252 (RIYCQVRANARRLPARPGTAGTTSTRARRKPRSLALLRT) are Cytoplasmic-facing. Residues 253-273 (LSVVLLAFVACWGPLFLLLLL) form a helical membrane-spanning segment. At 274–287 (DVACPARTCPVLLQ) the chain is on the extracellular side. A helical transmembrane segment spans residues 288-308 (ADPFLGLAMANSLLNPIIYTL). Residues 309–398 (TNRDLRHALL…RTLVSEPAAD (90 aa)) lie on the Cytoplasmic side of the membrane. Residue cysteine 323 is the site of S-palmitoyl cysteine attachment. Positions 329–398 (GRDPSGSQQS…RTLVSEPAAD (70 aa)) are disordered. Residues 333–347 (SGSQQSASAAEASGG) are compositionally biased toward low complexity. Serine 381 carries the phosphoserine modification.

This sequence belongs to the G-protein coupled receptor 1 family. Widely expressed in the brain, most prominently in the corpus callosum, which is predominantly white matter. Detected in spleen, peripheral blood leukocytes, placenta, lung, aorta and fetal spleen. Low-level signal detected in many tissue extracts. Overexpressed in leukemic large granular lymphocytes. Isoform 1 is predominantly expressed in peripheral tissues. Isoform 2 is expressed in brain, spleen and peripheral blood leukocytes.

It is found in the cell membrane. Functionally, receptor for the lysosphingolipid sphingosine 1-phosphate (S1P). S1P is a bioactive lysophospholipid that elicits diverse physiological effect on most types of cells and tissues. Is coupled to both the G(i/0)alpha and G(12) subclass of heteromeric G-proteins. May play a regulatory role in the transformation of radial glial cells into astrocytes and may affect proliferative activity of these cells. In Homo sapiens (Human), this protein is Sphingosine 1-phosphate receptor 5 (S1PR5).